The sequence spans 531 residues: Muscarinic acetylcholine receptor M5 (531 aa).

At 1–28 (MEGESYNESTVNGTPVNHQALERHGLWE) the chain is on the extracellular side. An N-linked (GlcNAc...) asparagine glycan is attached at N7. The chain crosses the membrane as a helical span at residues 29–52 (VITIAVVTAVVSLMTIVGNVLVMI). Residues 53-65 (SFKVNSQLKTVNN) lie on the Cytoplasmic side of the membrane. A helical membrane pass occupies residues 66 to 86 (YYLLSLACADLIIGIFSMNLY). Topologically, residues 87 to 103 (TTYILMGRWVLGSLACD) are extracellular. C102 and C182 are disulfide-bonded. The helical transmembrane segment at 104-125 (LWLALDYVASNASVMNLLVISF) threads the bilayer. Residues 126–145 (DRYFSITRPLTYRAKRTPKR) are Cytoplasmic-facing. A helical transmembrane segment spans residues 146–168 (AGIMIGLAWLVSFILWAPAILCW). The Extracellular portion of the chain corresponds to 169-190 (QYLVGKRTVPPDECQIQFLSEP). The chain crosses the membrane as a helical span at residues 191–213 (TITFGTAIAAFYIPVSVMTILYC). Residues 214–442 (RIYRETEKRT…LVKERKAAQT (229 aa)) lie on the Cytoplasmic side of the membrane. Disordered regions lie at residues 259–295 (SLAQ…DWEK) and 327–346 (EAKE…ETVV). Positions 267-287 (QASWSSSRRSTSTTGKTTQAT) are enriched in low complexity. Polar residues predominate over residues 334 to 346 (KESNTQETKETVV). A helical membrane pass occupies residues 443–463 (LSAILLAFIITWTPYNIMVLV). Over 464-477 (STFCDKCVPVTLWH) the chain is Extracellular. Residues 478–497 (LGYWLCYVNSTINPICYALC) traverse the membrane as a helical segment. Residues 498-531 (NRTFRKTFKLLLLCRWKKKKVEEKLYWQGNSKLP) are Cytoplasmic-facing. Residues T500 and T504 each carry the phosphothreonine modification.

This sequence belongs to the G-protein coupled receptor 1 family. Muscarinic acetylcholine receptor subfamily. CHRM5 sub-subfamily.

It localises to the cell membrane. It is found in the postsynaptic cell membrane. The muscarinic acetylcholine receptor mediates various cellular responses, including inhibition of adenylate cyclase, breakdown of phosphoinositides and modulation of potassium channels through the action of G proteins. Primary transducing effect is Pi turnover. The chain is Muscarinic acetylcholine receptor M5 (Chrm5) from Rattus norvegicus (Rat).